The primary structure comprises 395 residues: Ribosomal RNA small subunit methyltransferase H (395 aa).

S-adenosyl-L-methionine contacts are provided by residues 101-103, aspartate 120, tyrosine 147, aspartate 171, and glutamine 178; that span reads GGH.

Belongs to the methyltransferase superfamily. RsmH family.

It is found in the cytoplasm. It carries out the reaction cytidine(1402) in 16S rRNA + S-adenosyl-L-methionine = N(4)-methylcytidine(1402) in 16S rRNA + S-adenosyl-L-homocysteine + H(+). Its function is as follows. Specifically methylates the N4 position of cytidine in position 1402 (C1402) of 16S rRNA. The sequence is that of Ribosomal RNA small subunit methyltransferase H from Mycobacterium marinum (strain ATCC BAA-535 / M).